The sequence spans 632 residues: U-box domain-containing protein 14 (632 aa).

Positions 247–321 constitute a U-box domain; that stretch reads VIPEYFRCPI…ALWCESNGIE (75 aa). 5 ARM repeats span residues 377–416, 418–457, 459–498, 500–539, and 541–580; these read VDNRVCIAEAGAIPLLVELLSSPDPRTQEHSVTALLNLSI, EGNKGAIVDAGAITDIVEVLKNGSMEARENAAATLFSLSV, DENKVAIGAAGAIQALISLLEEGTRRGKKDAATAIFNLCI, QGNKSRAVKGGIVDPLTRLLKDAGGGMVDEALAILAILST, and QEGKTAIAEAESIPVLVEIIRTGSPRNRENAAAILWYLCI.

In terms of assembly, homodimer. Interacts with SNL1. Binds to SD11, SD16, SD17, SD18, SD113, SD129 and SD25. Expressed in flowers, green siliques, seeds and rosette leaves.

The catalysed reaction is S-ubiquitinyl-[E2 ubiquitin-conjugating enzyme]-L-cysteine + [acceptor protein]-L-lysine = [E2 ubiquitin-conjugating enzyme]-L-cysteine + N(6)-ubiquitinyl-[acceptor protein]-L-lysine.. It functions in the pathway protein modification; protein ubiquitination. Functions as an E3 ubiquitin ligase with specific E2 ubiquitin-conjugating enzymes. Undergoes auto-ubiquitination. The polypeptide is U-box domain-containing protein 14 (PUB14) (Arabidopsis thaliana (Mouse-ear cress)).